The following is a 536-amino-acid chain: Protoporphyrinogen oxidase, chloroplastic (536 aa).

The transit peptide at 1 to 36 directs the protein to the chloroplast; sequence MAAAAAAMATATSATAAPPLRIRDAARRTRRRGHVR. FAD is bound by residues 62–67, 87–88, and 111–114; these read GGGISG, EA, and GPNS. The interval 248–272 is disordered; the sequence is TIKTIQERGKNPKPPRDPRLPTPKG. The segment covering 252–266 has biased composition (basic and acidic residues); it reads IQERGKNPKPPRDPR. 510–512 contacts FAD; that stretch reads VAL.

The protein belongs to the protoporphyrinogen/coproporphyrinogen oxidase family. Protoporphyrinogen oxidase subfamily. It depends on FAD as a cofactor.

The protein resides in the plastid. Its subcellular location is the chloroplast. The catalysed reaction is protoporphyrinogen IX + 3 O2 = protoporphyrin IX + 3 H2O2. The protein operates within porphyrin-containing compound metabolism; protoporphyrin-IX biosynthesis; protoporphyrin-IX from protoporphyrinogen-IX: step 1/1. It functions in the pathway porphyrin-containing compound metabolism; chlorophyll biosynthesis. Catalyzes the 6-electron oxidation of protoporphyrinogen-IX to form protoporphyrin-IX. In Oryza sativa subsp. japonica (Rice), this protein is Protoporphyrinogen oxidase, chloroplastic (PPOX1).